A 1438-amino-acid chain; its full sequence is DNA polymerase III PolC-type (1438 aa).

The region spanning 422–578 (YVVFDVETTG…YDTEATAYIF (157 aa)) is the Exonuclease domain.

It belongs to the DNA polymerase type-C family. PolC subfamily.

It is found in the cytoplasm. The catalysed reaction is DNA(n) + a 2'-deoxyribonucleoside 5'-triphosphate = DNA(n+1) + diphosphate. Required for replicative DNA synthesis. This DNA polymerase also exhibits 3' to 5' exonuclease activity. In Staphylococcus aureus (strain MSSA476), this protein is DNA polymerase III PolC-type.